The primary structure comprises 60 residues: UPF0434 protein ECA2555 (60 aa).

This sequence belongs to the UPF0434 family.

The polypeptide is UPF0434 protein ECA2555 (Pectobacterium atrosepticum (strain SCRI 1043 / ATCC BAA-672) (Erwinia carotovora subsp. atroseptica)).